The chain runs to 435 residues: MQAVSVGLFLFSMTWAAPKLNEDGSSGGNQGNIHLASVKPEPMVGKGTEGGRDAPLHLLDQNRQGATLLRNITQPVKSLVTGTEVQSDRNKEKKPQSVLSVIPTDVHNTNDYSEDTENQQRDLLLQNSPGQSKHTPRARRSTHYLTHLPQIRKILSDFEDSASPDLLVRGDNDVPPFSGDGQHFMHTPDRGGAVGSDPESSAGHPVSGSSNVEIVDPHTNGLGSNEIPGREGHIGGAYATRGKTAQGAGSADVSLVEGSNEITGSTKFRELPGKEGNRVDASSQNAHQGKVEFHYPQAPSKEKVKGGSREHTGKAGYNEIPKSSKGGASKDAEESKGNQVTLTESQRFPGKGKGQSSHSLGNEVKSEEDSSNSLSREGIAIAHRRTSHPTRNRGMSQRRGSWASRRPHPHRRVSTRQRDSSESSSSGSSSESSGD.

The signal sequence occupies residues 1 to 16; sequence MQAVSVGLFLFSMTWA. Asparagine 71 is a glycosylation site (N-linked (GlcNAc...) asparagine). Disordered stretches follow at residues 124-145 and 166-435; these read LLQNSPGQSKHTPRARRSTHYL and LLVR…SSGD. A dentonin region spans residues 164–186; it reads PDLLVRGDNDVPPFSGDGQHFMH. The Cell attachment site signature appears at 169–171; sequence RGD. The O-linked (Xyl...) (chondroitin sulfate) serine glycan is linked to serine 178. 2 stretches are compositionally biased toward basic and acidic residues: residues 267-278 and 300-313; these read KFRELPGKEGNR and SKEKVKGGSREHTG. The span at 337–346 shows a compositional bias: polar residues; it reads GNQVTLTESQ. 2 stretches are compositionally biased toward basic residues: residues 382–391 and 405–415; these read AHRRTSHPTR and RRPHPHRRVST. Residues 418-435 are ASARM motif; interaction with PHEX; the sequence is RDSSESSSSGSSSESSGD. Residues 422–435 are compositionally biased toward low complexity; that stretch reads ESSSSGSSSESSGD.

This sequence belongs to the PF07175/osteoregulin family. As to quaternary structure, interacts (via ASARM motif) with PHEX; the interaction is zinc-dependent. Post-translationally, phosphorylated on serine residues in the ASARM motif; the phosphorylation is important for the inhibition of bone mineralization. Cleaved by CTSB/cathepsin B; the cleavage is blocked by metalloprotease PHEX. As to expression, expressed in osteoblasts and osteocytes.

It is found in the secreted. It localises to the extracellular space. The protein localises to the extracellular matrix. In terms of biological role, regulates renal phosphate excretion. Regulates bone mineralization by osteoblasts and cartilage mineralization by chondrocytes. Regulates the mineralization of the extracellular matrix of the craniofacial complex, such as teeth, bone and cartilage. Increases dental pulp stem cell proliferation. This Rattus norvegicus (Rat) protein is Matrix extracellular phosphoglycoprotein.